The chain runs to 931 residues: Isoleucine--tRNA ligase (931 aa).

The 'HIGH' region signature appears at 58-68 (PYANGHLHCGH). Position 559 (E559) interacts with L-isoleucyl-5'-AMP. The 'KMSKS' region motif lies at 600-604 (KLSKS). K603 is an ATP binding site. Zn(2+)-binding residues include C894, C897, C914, and C917.

It belongs to the class-I aminoacyl-tRNA synthetase family. IleS type 1 subfamily. In terms of assembly, monomer. Zn(2+) is required as a cofactor.

It localises to the cytoplasm. The catalysed reaction is tRNA(Ile) + L-isoleucine + ATP = L-isoleucyl-tRNA(Ile) + AMP + diphosphate. Functionally, catalyzes the attachment of isoleucine to tRNA(Ile). As IleRS can inadvertently accommodate and process structurally similar amino acids such as valine, to avoid such errors it has two additional distinct tRNA(Ile)-dependent editing activities. One activity is designated as 'pretransfer' editing and involves the hydrolysis of activated Val-AMP. The other activity is designated 'posttransfer' editing and involves deacylation of mischarged Val-tRNA(Ile). The polypeptide is Isoleucine--tRNA ligase (Legionella pneumophila (strain Paris)).